Reading from the N-terminus, the 154-residue chain is UPF0756 membrane protein BPUM_2558 (154 aa).

Helical transmembrane passes span 8-28 (FLVL…ILAV), 54-74 (WGVT…DIGF), 87-107 (WIAL…IVLL), and 117-137 (LVFG…GPLI).

It belongs to the UPF0756 family.

It is found in the cell membrane. In Bacillus pumilus (strain SAFR-032), this protein is UPF0756 membrane protein BPUM_2558.